The sequence spans 119 residues: Large ribosomal subunit protein uL18 (119 aa).

This sequence belongs to the universal ribosomal protein uL18 family. In terms of assembly, part of the 50S ribosomal subunit; part of the 5S rRNA/L5/L18/L25 subcomplex. Contacts the 5S and 23S rRNAs.

Functionally, this is one of the proteins that bind and probably mediate the attachment of the 5S RNA into the large ribosomal subunit, where it forms part of the central protuberance. The protein is Large ribosomal subunit protein uL18 of Borrelia recurrentis (strain A1).